Consider the following 218-residue polypeptide: N-(5'-phosphoribosyl)anthranilate isomerase (218 aa).

The protein belongs to the TrpF family.

It carries out the reaction N-(5-phospho-beta-D-ribosyl)anthranilate = 1-(2-carboxyphenylamino)-1-deoxy-D-ribulose 5-phosphate. Its pathway is amino-acid biosynthesis; L-tryptophan biosynthesis; L-tryptophan from chorismate: step 3/5. This is N-(5'-phosphoribosyl)anthranilate isomerase from Stenotrophomonas maltophilia (strain R551-3).